The following is a 575-amino-acid chain: DNA polymerase lambda (575 aa).

In terms of domain architecture, BRCT spans 36–132 (EAEEWLSSLR…RLVDVAGFSI (97 aa)). The segment at 160–205 (ALLQTALPPPPSPTRPVSPPQKTKEAPNTQAQPISDDEASDGEETQ) is disordered. Residues 166–178 (LPPPPSPTRPVSP) are compositionally biased toward pro residues. Acidic residues predominate over residues 194-203 (SDDEASDGEE). Residues 265 to 279 (KAYSVQGDKWRALGY) are DNA-binding. Residue K312 is the Schiff-base intermediate with DNA of the active site. The DNA-binding stretch occupies residues 345 to 348 (GTKT). Residues R386, 417-420 (SYRR), and 426-429 (GDVD) each bind dCTP. The interval 420–429 (RGKATCGDVD) is involved in primer binding. 3 residues coordinate Mn(2+): D427, D429, and D490. A DNA-binding region spans residues 466-505 (ENGQQQKYLGVCRLPGPGWRHRRLDIIVVPYSEFACALLY). DCTP is bound at residue N513.

It belongs to the DNA polymerase type-X family. As to quaternary structure, interacts with PCNA. Interacts with PAXX; promoting POLL recruitment to double-strand breaks (DSBs) and stimulation of the end-filling activity of POLL. Interacts with XRCC4; promoting POLL recruitment to double-strand breaks (DSBs) and stimulation of the end-filling activity of POLL. Interacts with NHEJ1/XLF; promoting POLL recruitment to double-strand breaks (DSBs) and stimulation of the end-filling activity of POLL. Mn(2+) serves as cofactor.

The protein resides in the nucleus. It carries out the reaction DNA(n) + a 2'-deoxyribonucleoside 5'-triphosphate = DNA(n+1) + diphosphate. Its function is as follows. DNA polymerase that functions in several pathways of DNA repair. Involved in base excision repair (BER) responsible for repair of lesions that give rise to abasic (AP) sites in DNA. Also contributes to DNA double-strand break repair by non-homologous end joining and homologous recombination. Has both template-dependent and template-independent (terminal transferase) DNA polymerase activities. Also has a 5'-deoxyribose-5-phosphate lyase (dRP lyase) activity. The protein is DNA polymerase lambda of Macaca fascicularis (Crab-eating macaque).